Consider the following 193-residue polypeptide: Acyl carrier protein phosphodiesterase (193 aa).

This sequence belongs to the AcpH family.

The catalysed reaction is holo-[ACP] + H2O = apo-[ACP] + (R)-4'-phosphopantetheine + H(+). Converts holo-ACP to apo-ACP by hydrolytic cleavage of the phosphopantetheine prosthetic group from ACP. This is Acyl carrier protein phosphodiesterase from Enterobacter sp. (strain 638).